We begin with the raw amino-acid sequence, 271 residues long: Glutamate racemase (271 aa).

Substrate is bound by residues 9–10 (DS) and 41–42 (YG). Catalysis depends on cysteine 72, which acts as the Proton donor/acceptor. 73-74 (NT) contributes to the substrate binding site. Cysteine 183 acts as the Proton donor/acceptor in catalysis. 184–185 (TH) is a substrate binding site.

This sequence belongs to the aspartate/glutamate racemases family.

The catalysed reaction is L-glutamate = D-glutamate. Its pathway is cell wall biogenesis; peptidoglycan biosynthesis. In terms of biological role, provides the (R)-glutamate required for cell wall biosynthesis. The polypeptide is Glutamate racemase (Exiguobacterium sibiricum (strain DSM 17290 / CCUG 55495 / CIP 109462 / JCM 13490 / 255-15)).